A 275-amino-acid chain; its full sequence is 4-hydroxy-3-methylbut-2-enyl diphosphate reductase (275 aa).

C12 contributes to the [4Fe-4S] cluster binding site. (2E)-4-hydroxy-3-methylbut-2-enyl diphosphate-binding residues include H36 and H70. Dimethylallyl diphosphate is bound by residues H36 and H70. Isopentenyl diphosphate contacts are provided by H36 and H70. Position 92 (C92) interacts with [4Fe-4S] cluster. (2E)-4-hydroxy-3-methylbut-2-enyl diphosphate is bound at residue H120. H120 is a dimethylallyl diphosphate binding site. H120 is an isopentenyl diphosphate binding site. E122 (proton donor) is an active-site residue. T158 contributes to the (2E)-4-hydroxy-3-methylbut-2-enyl diphosphate binding site. C186 contributes to the [4Fe-4S] cluster binding site. (2E)-4-hydroxy-3-methylbut-2-enyl diphosphate is bound by residues S214, S215, N216, and S258. Residues S214, S215, N216, and S258 each coordinate dimethylallyl diphosphate. Positions 214, 215, 216, and 258 each coordinate isopentenyl diphosphate.

The protein belongs to the IspH family. The cofactor is [4Fe-4S] cluster.

The catalysed reaction is isopentenyl diphosphate + 2 oxidized [2Fe-2S]-[ferredoxin] + H2O = (2E)-4-hydroxy-3-methylbut-2-enyl diphosphate + 2 reduced [2Fe-2S]-[ferredoxin] + 2 H(+). The enzyme catalyses dimethylallyl diphosphate + 2 oxidized [2Fe-2S]-[ferredoxin] + H2O = (2E)-4-hydroxy-3-methylbut-2-enyl diphosphate + 2 reduced [2Fe-2S]-[ferredoxin] + 2 H(+). Its pathway is isoprenoid biosynthesis; dimethylallyl diphosphate biosynthesis; dimethylallyl diphosphate from (2E)-4-hydroxy-3-methylbutenyl diphosphate: step 1/1. It functions in the pathway isoprenoid biosynthesis; isopentenyl diphosphate biosynthesis via DXP pathway; isopentenyl diphosphate from 1-deoxy-D-xylulose 5-phosphate: step 6/6. Functionally, catalyzes the conversion of 1-hydroxy-2-methyl-2-(E)-butenyl 4-diphosphate (HMBPP) into a mixture of isopentenyl diphosphate (IPP) and dimethylallyl diphosphate (DMAPP). Acts in the terminal step of the DOXP/MEP pathway for isoprenoid precursor biosynthesis. This chain is 4-hydroxy-3-methylbut-2-enyl diphosphate reductase, found in Sulfurimonas denitrificans (strain ATCC 33889 / DSM 1251) (Thiomicrospira denitrificans (strain ATCC 33889 / DSM 1251)).